We begin with the raw amino-acid sequence, 725 residues long: MDGNDIRSTGKCPVMHGGNTAMGSSVTAWWPNALNLDILHQHDSKTNPLGQDFNYSEELKKLDVEALKADLRALMTDSQDWWPADWGSYVGMFARTAWHMAGSYRTSDGRGGANTGNQRFAPLNSWPDNVNTDKGRRLLWPIKKKYGNKISWADLIVLAGTVAYEAAGLKTYGFAFGREDIWHPEKDTYWGEEKEWLAPSDSRYGDVTKAETLANPLAAVQMGLIYVNPEGVNGKSDPQATAYQMRETFARMGMNDEETVALTAGGHTVGKCHGNGNVTDLSPDPEAAGPEFQGLGWMNTKGRGIGRNTMVSGLEGAWTTHPTQWDNGFFEMLFKHEWTLTHSPAGASQWEPITIAEEDKPADVEDPSIRHMPMMTDADMALKVDPIYREISLRFMNDFEAFSDAFARAWFKLTHRDMGPKARYLGPDVPAEDLVWQDPIPAGRSDYDVAAVKARIAASGLSASDLVATAWDSARTYRGSDHRGGANGARIRLAPQKDWEGNEPQRLARVLSVLEPIAAETGASLADVIVLGGNLGVEQAAKAAGFDIEVPFAPGRGDSTAEQTDAASFDVLEPLADGFRNWQKQDYVVSPEEMLLDRAQLMGLTAPEMTTLIGGLRVIGTNHGGTKHGVFTQRKGALTNDFFVTLTDMANNWVPVGNNLYEIRDRKTGATRYTATRVDLVFGSNSILRAYAEVYAQDDNAGKFVRDFVAAWTKVMNADRFDLAA.

A cross-link (tryptophyl-tyrosyl-methioninium (Trp-Tyr) (with M-252)) is located at residues 98–226; sequence WHMAGSYRTS…LAAVQMGLIY (129 aa). The Proton acceptor role is filled by histidine 99. Positions 226-252 form a cross-link, tryptophyl-tyrosyl-methioninium (Tyr-Met) (with W-98); that stretch reads YVNPEGVNGKSDPQATAYQMRETFARM. Histidine 267 provides a ligand contact to heme b.

This sequence belongs to the peroxidase family. Peroxidase/catalase subfamily. As to quaternary structure, homodimer or homotetramer. It depends on heme b as a cofactor. Formation of the three residue Trp-Tyr-Met cross-link is important for the catalase, but not the peroxidase activity of the enzyme.

The catalysed reaction is H2O2 + AH2 = A + 2 H2O. The enzyme catalyses 2 H2O2 = O2 + 2 H2O. Functionally, bifunctional enzyme with both catalase and broad-spectrum peroxidase activity. The sequence is that of Catalase-peroxidase from Paracoccus denitrificans (strain Pd 1222).